The primary structure comprises 493 residues: Glutamate--tRNA ligase (493 aa).

The short motif at 10–20 (PSPTGDPHVGT) is the 'HIGH' region element. The short motif at 251 to 255 (KLSKR) is the 'KMSKS' region element. Lys254 contacts ATP.

Belongs to the class-I aminoacyl-tRNA synthetase family. Glutamate--tRNA ligase type 1 subfamily. In terms of assembly, monomer.

Its subcellular location is the cytoplasm. The enzyme catalyses tRNA(Glu) + L-glutamate + ATP = L-glutamyl-tRNA(Glu) + AMP + diphosphate. In terms of biological role, catalyzes the attachment of glutamate to tRNA(Glu) in a two-step reaction: glutamate is first activated by ATP to form Glu-AMP and then transferred to the acceptor end of tRNA(Glu). This Pseudomonas syringae pv. syringae (strain B728a) protein is Glutamate--tRNA ligase.